Here is a 346-residue protein sequence, read N- to C-terminus: Probable dolichyl-diphosphooligosaccharide--protein glycosyltransferase subunit 3B (346 aa).

Residues 1–22 (MALKSKLVSLLFLIATLSSTFA) form the signal peptide. Over 23–189 (ASFSDSDSDS…KVGPIQRPPL (167 aa)) the chain is Lumenal. A glycan (N-linked (GlcNAc...) asparagine) is linked at Asn108. Residues 190–210 (LSKPQIGIIVALIVIATPFII) traverse the membrane as a helical segment. Residues 211–225 (KRVLKGETILHDTRL) lie on the Cytoplasmic side of the membrane. The helical transmembrane segment at 226 to 246 (WLSGAIFIYFFSVAGTMHNII) threads the bilayer. At 247 to 277 (RKMPMFLQDRNDPNKLVFFYQGSGMQLGAEG) the chain is on the lumenal side. Residues 278 to 298 (FAVGFLYTVVGLLLAFVTNVL) traverse the membrane as a helical segment. The Cytoplasmic portion of the chain corresponds to 299–308 (VRVKNITAQR). Residues 309–329 (LIMLLALFISFWAVKKVVYLD) traverse the membrane as a helical segment. Residues 330–346 (NWKTGYGIHPYWPSSWR) lie on the Lumenal side of the membrane.

Belongs to the OST3/OST6 family. As to quaternary structure, component of the oligosaccharyltransferase (OST) complex.

It localises to the endoplasmic reticulum membrane. Functionally, subunit of the oligosaccharyl transferase (OST) complex that catalyzes the initial transfer of a defined glycan (Glc(3)Man(9)GlcNAc(2) in eukaryotes) from the lipid carrier dolichol-pyrophosphate to an asparagine residue within an Asn-X-Ser/Thr consensus motif in nascent polypeptide chains, the first step in protein N-glycosylation. N-glycosylation occurs cotranslationally and the complex associates with the Sec61 complex at the channel-forming translocon complex that mediates protein translocation across the endoplasmic reticulum (ER). All subunits are required for a maximal enzyme activity. This chain is Probable dolichyl-diphosphooligosaccharide--protein glycosyltransferase subunit 3B (OST3B), found in Arabidopsis thaliana (Mouse-ear cress).